The sequence spans 377 residues: Bradyzoite pseudokinase 1 (377 aa).

Positions 1 to 26 (MANTSVRRRQLLSSVLLLQWLTTVLG) are cleaved as a signal peptide. The interval 39-58 (HGQFPSLRRTEGVSQSGSGH) is disordered. The Protein kinase domain occupies 48–354 (TEGVSQSGSG…IEEIMKDPLF (307 aa)).

The protein belongs to the protein kinase superfamily. STE Ser/Thr protein kinase family. WNG subfamily. Forms a complex composed of BPK1, MCP4, MAG1, GRA8 and GRA9. Interacts with MCP4. Interacts with MAG1. Interacts with GRA8. Interacts with GRA9.

The protein resides in the secreted. Functionally, required for the growth, maintenance, and/or stability, and thus infectivity, of bradyzoite cysts. In Toxoplasma gondii, this protein is Bradyzoite pseudokinase 1.